A 272-amino-acid polypeptide reads, in one-letter code: Cerberus (272 aa).

Residues 1–19 (MSLLLLQLLVLSCLGDTEP) form the signal peptide. 4 cysteine pairs are disulfide-bonded: cysteine 168-cysteine 215, cysteine 182-cysteine 229, cysteine 192-cysteine 245, and cysteine 196-cysteine 247. Residues 168–253 (CRTLPFSQSV…ECNCETQKIE (86 aa)) enclose the CTCK domain. Asparagine 228 carries an N-linked (GlcNAc...) asparagine glycan.

Belongs to the DAN family.

It is found in the secreted. Functionally, cytokine that acts as a regulator of the activity of Nodal/BMP pathways during the establishment of bilateral asymmetry in the head and trunk of the embryo. This Gallus gallus (Chicken) protein is Cerberus (CER1).